A 235-amino-acid polypeptide reads, in one-letter code: MKKTIIASSLAVGLGVVAGNAGHADASEAQVNKAELAQLAQSNDQSLNDSPIQEGAYNVTFDYEGFTYHFESDGTNWSWNYAQSGQASQQQDVSAQASTVSNQTSAEQVGSQQQSSQAQPTQTQQAPQTEQTQQPQTEATTSNSSSSNNNASSGSSVNVNSHLQQIAQRESGGDITAINPSSGAAGKYQFLQSTWDSVAPDEYKGVSPAQAPEDVQDAAAVKLYNTAGASQWVTA.

Positions 1 to 26 (MKKTIIASSLAVGLGVVAGNAGHADA) are cleaved as a signal peptide. Positions 90–159 (QQDVSAQAST…NASSGSSVNV (70 aa)) are disordered. The segment covering 99-110 (TVSNQTSAEQVG) has biased composition (polar residues). A compositionally biased stretch (low complexity) spans 111–159 (SQQQSSQAQPTQTQQAPQTEQTQQPQTEATTSNSSSSNNNASSGSSVNV).

The protein belongs to the transglycosylase family. SceD subfamily.

It is found in the secreted. Functionally, is able to cleave peptidoglycan and affects clumping and separation of bacterial cells. This chain is Probable transglycosylase SceD (sceD), found in Staphylococcus haemolyticus (strain JCSC1435).